A 282-amino-acid polypeptide reads, in one-letter code: NADPH-dependent 7-cyano-7-deazaguanine reductase (282 aa).

A substrate-binding site is contributed by 88-90 (IES). 90-91 (SK) contributes to the NADPH binding site. The active-site Thioimide intermediate is the cysteine 190. The active-site Proton donor is aspartate 197. 229 to 230 (HE) is a substrate binding site. NADPH is bound at residue 258–259 (RG).

Belongs to the GTP cyclohydrolase I family. QueF type 2 subfamily. Homodimer.

Its subcellular location is the cytoplasm. The enzyme catalyses 7-aminomethyl-7-carbaguanine + 2 NADP(+) = 7-cyano-7-deazaguanine + 2 NADPH + 3 H(+). Its pathway is tRNA modification; tRNA-queuosine biosynthesis. Catalyzes the NADPH-dependent reduction of 7-cyano-7-deazaguanine (preQ0) to 7-aminomethyl-7-deazaguanine (preQ1). The chain is NADPH-dependent 7-cyano-7-deazaguanine reductase from Shigella flexneri serotype 5b (strain 8401).